We begin with the raw amino-acid sequence, 585 residues long: Lipoprotein LpqB (585 aa).

A signal peptide spans 1–17 (MGRKLLGLLMLAVLLAG). The N-palmitoyl cysteine moiety is linked to residue C18. C18 carries S-diacylglycerol cysteine lipidation. Disordered regions lie at residues 24–46 (SSAP…KPTP) and 560–585 (PSAD…VLPG).

It belongs to the LpqB lipoprotein family.

Its subcellular location is the cell membrane. This is Lipoprotein LpqB from Mycobacterium paratuberculosis.